A 350-amino-acid polypeptide reads, in one-letter code: Histidinol-phosphate aminotransferase 1 (350 aa).

Residue Lys210 is modified to N6-(pyridoxal phosphate)lysine.

Belongs to the class-II pyridoxal-phosphate-dependent aminotransferase family. Histidinol-phosphate aminotransferase subfamily. As to quaternary structure, homodimer. Requires pyridoxal 5'-phosphate as cofactor.

The catalysed reaction is L-histidinol phosphate + 2-oxoglutarate = 3-(imidazol-4-yl)-2-oxopropyl phosphate + L-glutamate. It participates in amino-acid biosynthesis; L-histidine biosynthesis; L-histidine from 5-phospho-alpha-D-ribose 1-diphosphate: step 7/9. The protein is Histidinol-phosphate aminotransferase 1 of Pseudomonas fluorescens (strain Pf0-1).